The following is a 419-amino-acid chain: Caspase-12 (419 aa).

The CARD domain maps to 1 to 92; it reads MAARRTHERD…QLSLQFSNDE (92 aa). Phosphoserine is present on Ser-85. The segment at 88-113 is disordered; sequence FSNDEDDGPQKICTPSSPSESKRKVE. Active-site residues include His-250 and Cys-298.

It belongs to the peptidase C14A family. In terms of assembly, heterotetramer that consists of two anti-parallel arranged heterodimers, each one formed by two subunits (Potential). Interacts with TRAF2 under resting conditions; this interaction is reduced in ER stress conditions. In terms of tissue distribution, mainly expressed in skeletal muscle and lung.

Involved in the activation cascade of caspases responsible for apoptosis execution. The chain is Caspase-12 (Casp12) from Mus musculus (Mouse).